A 660-amino-acid polypeptide reads, in one-letter code: Bifunctional polymyxin resistance protein ArnA (660 aa).

Residues 1-304 (MKTVVFAYHD…TLGLVQGSRL (304 aa)) are formyltransferase ArnAFT. Residue 86–88 (HLI) coordinates (6R)-10-formyltetrahydrofolate. The Proton donor; for formyltransferase activity role is filled by histidine 104. Residues arginine 114 and 136-140 (VKRAD) each bind (6R)-10-formyltetrahydrofolate. A dehydrogenase ArnADH region spans residues 314–660 (RRTRVLILGV…RTVDLTDKPS (347 aa)). NAD(+)-binding positions include aspartate 347 and 368 to 369 (DI). UDP-alpha-D-glucuronate contacts are provided by residues alanine 393, tyrosine 398, and 432–433 (TS). The active-site Proton acceptor; for decarboxylase activity is glutamate 434. Residues arginine 460, asparagine 492, 526–535 (KLIDGGKQKR), and tyrosine 613 each bind UDP-alpha-D-glucuronate. The active-site Proton donor; for decarboxylase activity is arginine 619.

In the N-terminal section; belongs to the Fmt family. UDP-L-Ara4N formyltransferase subfamily. It in the C-terminal section; belongs to the NAD(P)-dependent epimerase/dehydratase family. UDP-glucuronic acid decarboxylase subfamily. In terms of assembly, homohexamer, formed by a dimer of trimers.

It catalyses the reaction UDP-alpha-D-glucuronate + NAD(+) = UDP-beta-L-threo-pentopyranos-4-ulose + CO2 + NADH. The enzyme catalyses UDP-4-amino-4-deoxy-beta-L-arabinose + (6R)-10-formyltetrahydrofolate = UDP-4-deoxy-4-formamido-beta-L-arabinose + (6S)-5,6,7,8-tetrahydrofolate + H(+). The protein operates within nucleotide-sugar biosynthesis; UDP-4-deoxy-4-formamido-beta-L-arabinose biosynthesis; UDP-4-deoxy-4-formamido-beta-L-arabinose from UDP-alpha-D-glucuronate: step 1/3. It functions in the pathway nucleotide-sugar biosynthesis; UDP-4-deoxy-4-formamido-beta-L-arabinose biosynthesis; UDP-4-deoxy-4-formamido-beta-L-arabinose from UDP-alpha-D-glucuronate: step 3/3. Its pathway is bacterial outer membrane biogenesis; lipopolysaccharide biosynthesis. Bifunctional enzyme that catalyzes the oxidative decarboxylation of UDP-glucuronic acid (UDP-GlcUA) to UDP-4-keto-arabinose (UDP-Ara4O) and the addition of a formyl group to UDP-4-amino-4-deoxy-L-arabinose (UDP-L-Ara4N) to form UDP-L-4-formamido-arabinose (UDP-L-Ara4FN). The modified arabinose is attached to lipid A and is required for resistance to polymyxin and cationic antimicrobial peptides. The polypeptide is Bifunctional polymyxin resistance protein ArnA (Escherichia coli (strain SMS-3-5 / SECEC)).